Here is a 186-residue protein sequence, read N- to C-terminus: dTTP/UTP pyrophosphatase (186 aa).

Aspartate 70 acts as the Proton acceptor in catalysis.

Belongs to the Maf family. YhdE subfamily. It depends on a divalent metal cation as a cofactor.

It is found in the cytoplasm. It catalyses the reaction dTTP + H2O = dTMP + diphosphate + H(+). The enzyme catalyses UTP + H2O = UMP + diphosphate + H(+). Functionally, nucleoside triphosphate pyrophosphatase that hydrolyzes dTTP and UTP. May have a dual role in cell division arrest and in preventing the incorporation of modified nucleotides into cellular nucleic acids. The chain is dTTP/UTP pyrophosphatase from Vibrio vulnificus (strain CMCP6).